We begin with the raw amino-acid sequence, 211 residues long: CASP-like protein 3A1 (211 aa).

Over 1-45 the chain is Cytoplasmic; the sequence is MGSIGNGRSDSVVGIQMPPAGSKMVLEPEALQVTTSPVPRWPRLG. Residues 46–66 traverse the membrane as a helical segment; sequence VVMVATRAVAMVMALLSMSLM. The Extracellular portion of the chain corresponds to 67–95; that stretch reads VSSKQRGILTIFGIEIPLDANWSFSYSLQ. N87 carries N-linked (GlcNAc...) asparagine glycosylation. The helical transmembrane segment at 96–116 threads the bilayer; that stretch reads FLVAMSTASAAYSLAQLLLIA. Topologically, residues 117 to 131 are cytoplasmic; sequence HKAVKKSPIVPSRRH. Residues 132-152 form a helical membrane-spanning segment; that stretch reads AWLLFAGDQVFSLAMMSAGSA. The Extracellular segment spans residues 153–186; the sequence is AAAVANLNRTGIRHTALPNFCKPLPRFCDLSAVS. Residue N160 is glycosylated (N-linked (GlcNAc...) asparagine). Residues 187–207 form a helical membrane-spanning segment; that stretch reads IACAFLSCVFLAASAVIDVIW. The Cytoplasmic portion of the chain corresponds to 208 to 211; that stretch reads LSSP.

This sequence belongs to the Casparian strip membrane proteins (CASP) family. Homodimer and heterodimers.

The protein localises to the cell membrane. This is CASP-like protein 3A1 from Sorghum bicolor (Sorghum).